A 439-amino-acid polypeptide reads, in one-letter code: ATP-dependent protease ATPase subunit HslU (439 aa).

ATP contacts are provided by residues isoleucine 17, 59–64 (GVGKTE), aspartate 251, glutamate 317, and arginine 389.

The protein belongs to the ClpX chaperone family. HslU subfamily. In terms of assembly, a double ring-shaped homohexamer of HslV is capped on each side by a ring-shaped HslU homohexamer. The assembly of the HslU/HslV complex is dependent on binding of ATP.

Its subcellular location is the cytoplasm. In terms of biological role, ATPase subunit of a proteasome-like degradation complex; this subunit has chaperone activity. The binding of ATP and its subsequent hydrolysis by HslU are essential for unfolding of protein substrates subsequently hydrolyzed by HslV. HslU recognizes the N-terminal part of its protein substrates and unfolds these before they are guided to HslV for hydrolysis. The protein is ATP-dependent protease ATPase subunit HslU of Campylobacter jejuni subsp. jejuni serotype O:23/36 (strain 81-176).